Reading from the N-terminus, the 348-residue chain is Signal recognition particle receptor FtsY (348 aa).

GTP is bound by residues 143-150 (GVNGVGKT), 225-229 (DTSGR), and 289-292 (TKMD).

The protein belongs to the GTP-binding SRP family. FtsY subfamily. Part of the signal recognition particle protein translocation system, which is composed of SRP and FtsY.

It is found in the cell membrane. It localises to the cytoplasm. It catalyses the reaction GTP + H2O = GDP + phosphate + H(+). In terms of biological role, involved in targeting and insertion of nascent membrane proteins into the cytoplasmic membrane. Acts as a receptor for the complex formed by the signal recognition particle (SRP) and the ribosome-nascent chain (RNC). This Mycoplasma pneumoniae (strain ATCC 29342 / M129 / Subtype 1) (Mycoplasmoides pneumoniae) protein is Signal recognition particle receptor FtsY.